Here is a 498-residue protein sequence, read N- to C-terminus: Calcium-dependent protein kinase 22 (498 aa).

Gly-2 carries the N-myristoyl glycine lipid modification. A Protein kinase domain is found at 36–305; that stretch reads YSFGDELGKG…AADVLEHPWM (270 aa). Residues 42 to 50 and Lys-65 contribute to the ATP site; that span reads LGKGNFGTT. The Proton acceptor role is filled by Asp-164. The residue at position 204 (Ser-204) is a Phosphoserine. The tract at residues 309–339 is autoinhibitory domain; sequence APDKPIDNVVLSRMKQFRAMNKLKKLALKVI. EF-hand domains lie at 346–381, 382–417, 418–453, and 454–488; these read EEIKGLKTMFENMDMDKSGSITYEELKMGLNRHGSK, LSETEVKQLMEAADVDGNGTIDYIEFISATMHRHRL, ERDEHLYKAFQYFDKDGSGHITKEEVEIAMKEHGMG, and DEANAKDLISEFDKNNDGKIDYEEFCTMMRNGILQ. 20 residues coordinate Ca(2+): Asp-359, Asp-361, Ser-363, Ser-365, Glu-370, Asp-395, Asp-397, Asn-399, Thr-401, Glu-406, Asp-431, Asp-433, Ser-435, His-437, Glu-442, Asp-466, Asn-468, Asp-470, Lys-472, and Glu-477.

The protein belongs to the protein kinase superfamily. Ser/Thr protein kinase family. CDPK subfamily.

The protein resides in the membrane. It catalyses the reaction L-seryl-[protein] + ATP = O-phospho-L-seryl-[protein] + ADP + H(+). The enzyme catalyses L-threonyl-[protein] + ATP = O-phospho-L-threonyl-[protein] + ADP + H(+). With respect to regulation, activated by calcium. Autophosphorylation may play an important role in the regulation of the kinase activity. In terms of biological role, may play a role in signal transduction pathways that involve calcium as a second messenger. This chain is Calcium-dependent protein kinase 22 (CPK22), found in Arabidopsis thaliana (Mouse-ear cress).